Reading from the N-terminus, the 317-residue chain is Cytochrome f (317 aa).

Residues 1-31 form the signal peptide; it reads MIFKPQSFLKAIVLSMTITFAFNMSAPIASA. Heme-binding residues include tyrosine 32, cysteine 52, cysteine 55, and histidine 56. Residues 280-302 traverse the membrane as a helical segment; that stretch reads PVRIQGLLAFFACILLAQILLVV.

It belongs to the cytochrome f family. In terms of assembly, the 4 large subunits of the cytochrome b6-f complex are cytochrome b6, subunit IV (17 kDa polypeptide, petD), cytochrome f and the Rieske protein, while the 4 small subunits are PetG, PetL, PetM and PetN. The complex functions as a dimer. It depends on heme as a cofactor.

Its subcellular location is the plastid. The protein localises to the chloroplast thylakoid membrane. Component of the cytochrome b6-f complex, which mediates electron transfer between photosystem II (PSII) and photosystem I (PSI), cyclic electron flow around PSI, and state transitions. In Chlamydomonas subcaudata, this protein is Cytochrome f.